Consider the following 82-residue polypeptide: DNA-directed RNA polymerase subunit Rpo5 (82 aa).

The protein belongs to the archaeal Rpo5/eukaryotic RPB5 RNA polymerase subunit family. As to quaternary structure, part of the RNA polymerase complex.

Its subcellular location is the cytoplasm. It catalyses the reaction RNA(n) + a ribonucleoside 5'-triphosphate = RNA(n+1) + diphosphate. Functionally, DNA-dependent RNA polymerase (RNAP) catalyzes the transcription of DNA into RNA using the four ribonucleoside triphosphates as substrates. This is DNA-directed RNA polymerase subunit Rpo5 from Thermococcus kodakarensis (strain ATCC BAA-918 / JCM 12380 / KOD1) (Pyrococcus kodakaraensis (strain KOD1)).